We begin with the raw amino-acid sequence, 139 residues long: Protein FAM237B (139 aa).

Residues methionine 1–alanine 24 form the signal peptide. Methionine amide is present on methionine 112. The propeptide at glycine 113–glutamate 139 is removed in the mature form.

In terms of processing, the active form requires C-terminal amidation and disulfide bond formation.

The protein resides in the secreted. Functionally, may be capable of activating GPR83 via the GNAQ signaling pathway. This chain is Protein FAM237B, found in Homo sapiens (Human).